Consider the following 506-residue polypeptide: MVSSTTPSSGEYLLEMSGINKSFPGVKALDNVNLKVRPHSIHALMGENGAGKSTLLKCLFGIYKKDSGTILFQGKEIDFHSAKEALENGISMVHQELNLVLQRSVMDNMWLGRYPTKGMFVDQDKMYRETKAIFDELDIDIDPRARVGTLSVSQMQMIEIAKAFSYNAKIVIMDEPTSSLTEKEVNHLFTIIRKLKERGCGIVYISHKMEEIFQLCDEVTVLRDGQWIATEPLAGLTMDKIIAMMVGRSLNQRFPDKENKPGEVILEVRNLTSLRQPSIRDVSFDLHKGEILGIAGLVGAKRTDIVETLFGIREKSAGTITLHGKKINNHNANEAINHGFALVTEERRSTGIYAYLDIGFNSLISNIRNYKNKVGLLDNSRMKSDTQWVIDSMRVKTPGHRTQIGSLSGGNQQKVIIGRWLLTQPEILMLDEPTRGIDVGAKFEIYQLIAELAKKGKGIIIISSEMPELLGITDRILVMSNGLVSGIVDTKTTTQNEILRLASLHL.

2 consecutive ABC transporter domains span residues 14–249 and 264–506; these read LEMS…VGRS and VILE…SLHL. An ATP-binding site is contributed by 46–53; sequence GENGAGKS.

This sequence belongs to the ABC transporter superfamily. Galactose/methyl galactoside importer (TC 3.A.1.2.3) family. The complex is composed of one ATP-binding protein (MglA), two transmembrane proteins (MglC) and a solute-binding protein (MglB).

The protein localises to the cell inner membrane. It carries out the reaction D-galactose(out) + ATP + H2O = D-galactose(in) + ADP + phosphate + H(+). It catalyses the reaction methyl beta-D-galactoside(out) + ATP + H2O = methyl beta-D-galactoside(in) + ADP + phosphate + H(+). Part of the ABC transporter complex MglABC involved in galactose/methyl galactoside import. Responsible for energy coupling to the transport system. This Escherichia coli O157:H7 protein is Galactose/methyl galactoside import ATP-binding protein MglA.